The chain runs to 1413 residues: DNA-directed RNA polymerase subunit beta' (1413 aa).

Cys-70, Cys-72, Cys-85, and Cys-88 together coordinate Zn(2+). Mg(2+)-binding residues include Asp-460, Asp-462, and Asp-464. Residues Cys-819, Cys-893, Cys-900, and Cys-903 each coordinate Zn(2+). Residues 1393-1413 (EAFEFGTPETPAAEQTPHTNE) form a disordered region.

This sequence belongs to the RNA polymerase beta' chain family. As to quaternary structure, the RNAP catalytic core consists of 2 alpha, 1 beta, 1 beta' and 1 omega subunit. When a sigma factor is associated with the core the holoenzyme is formed, which can initiate transcription. The cofactor is Mg(2+). It depends on Zn(2+) as a cofactor.

It carries out the reaction RNA(n) + a ribonucleoside 5'-triphosphate = RNA(n+1) + diphosphate. In terms of biological role, DNA-dependent RNA polymerase catalyzes the transcription of DNA into RNA using the four ribonucleoside triphosphates as substrates. The chain is DNA-directed RNA polymerase subunit beta' from Paraburkholderia phymatum (strain DSM 17167 / CIP 108236 / LMG 21445 / STM815) (Burkholderia phymatum).